The following is a 1773-amino-acid chain: Zinc finger CCCH domain-containing protein 19 (1773 aa).

Residues 145-166 are disordered; it reads SGDRLEENKEVSMEEEPSSHEL. Residues 147–156 are compositionally biased toward basic and acidic residues; sequence DRLEENKEVS. The stretch at 196–218 forms a coiled coil; sequence GEEIESDLESKKEKVDVIEEETT. 3 disordered regions span residues 270–290, 361–409, and 434–591; these read IGEGAKDLTDGDAKEGVDVTE, DVDK…AGQT, and ISEM…KTVK. 2 stretches are compositionally biased toward basic and acidic residues: residues 273-286 and 361-378; these read GAKDLTDGDAKEGV and DVDKDSEAGKSLDIHVPE. The stretch at 403–437 forms a coiled coil; the sequence is AEEAGQTVDLEEIREENQELSKELAQVDETKISEM. 2 stretches are compositionally biased toward basic and acidic residues: residues 444-455 and 497-513; these read MIKDEDQEKDDN and KVDRTKIAEVSEETDTR. 2 stretches are compositionally biased toward acidic residues: residues 514-529 and 551-572; these read IEDEDQEKDDEMTDVA and EEMTETQEDSVMADEEPEEVEE. The segment covering 578 to 588 has biased composition (basic residues); the sequence is GGKRKRGRNTK. The Nuclear localization signal 1 motif lies at 581–588; it reads RKRGRNTK. The PHD-type zinc-finger motif lies at 599–665; that stretch reads EDVCFMCFDG…TYLCYTCMFS (67 aa). Residues 741-751 are compositionally biased toward basic and acidic residues; that stretch reads AKRPLKGHETN. Residues 741-797 form a disordered region; the sequence is AKRPLKGHETNASKQGTASETDYVTDGGSDSDSSPKKRKTRSRSKSGSAEKILSSGD. Over residues 752–762 the composition is skewed to polar residues; it reads ASKQGTASETD. The SWIB/MDM2 domain maps to 801-884; it reads SDETMEWASK…LNLLDSHFLK (84 aa). Over residues 903-919 the composition is skewed to basic and acidic residues; sequence PNHVDVDENLDHPVKSG. The segment at 903–935 is disordered; that stretch reads PNHVDVDENLDHPVKSGKDKKRKTRKKNVRKGR. Positions 920–935 are enriched in basic residues; sequence KDKKRKTRKKNVRKGR. The Nuclear localization signal 2 signature appears at 921–928; sequence DKKRKTRK. The Plus3 domain maps to 944-1076; it reads AVDMHNINLI…KAIALQEVRV (133 aa). Residues 1139-1152 are compositionally biased toward basic and acidic residues; the sequence is EEIPEIHADPKMDP. Positions 1139–1274 are disordered; that stretch reads EEIPEIHADP…PETPARSSRA (136 aa). The span at 1153 to 1163 shows a compositional bias: acidic residues; the sequence is DCESEDEDEKE. Residues 1193–1212 are compositionally biased toward polar residues; the sequence is FSSNESWTGTSNYSNTSANR. At S1281 the chain carries Phosphoserine. In terms of domain architecture, GYF spans 1307–1361; it reads EKIWHYKDPSGKVQGPFSMAQLRKWNNTGYFPAKLEIWKANESPLDSVLLTDALA. 4 stretches are compositionally biased toward polar residues: residues 1409-1433, 1441-1469, 1499-1509, and 1518-1528; these read RNSQDTWSQGGSLPSPTPNQITTPT, SRWSPTKPSPQSANQSMNYSVAQSGQSQT, VSVNHSATLHS, and SWGSMQTDHGG. Disordered regions lie at residues 1409–1469, 1485–1605, and 1649–1746; these read RNSQ…QSQT, QPQT…SWGQ, and GQTQ…QQNN. Residues 1529–1555 are compositionally biased toward low complexity; that stretch reads SNTPSSQNNSTSYGTPSPSVLPSQSQP. Residues 1569 to 1579 show a composition bias toward polar residues; it reads SQPNAQAQAQW. 2 stretches are compositionally biased toward low complexity: residues 1585–1602 and 1666–1677; these read NNNQNSAQPQAPANQNSS and QSQSQSQVQAQA. Residues 1678-1708 show a composition bias toward polar residues; the sequence is GTTGSGWMQPGQGIQSGNSNQNWGTQNQTAI. The span at 1722-1735 shows a compositional bias: low complexity; the sequence is GNQQQSQNGDSGYG. A compositionally biased stretch (polar residues) spans 1737-1746; that stretch reads NRQSGGQQNN. A C3H1-type zinc finger spans residues 1747–1773; that stretch reads FKGQRVCKFFRENGHCRKGASCNYLHN.

In terms of assembly, interacts with unmethylated histone H3 and AGO2. The interaction with AGO2 in required to direct DNA methylation and silencing. Expressed in seedlings, mostly in the vasculature and shoot apices of young seedlings.

The protein localises to the nucleus. Functionally, plays a central role in integrating RNA silencing and chromatin signals in 21 nt siRNA-dependent DNA methylation on cytosine pathway leading to transcriptional gene silencing of specific sequences. Involved in a chromatin-based RNA silencing pathway that encompasses both post-transcriptional gene silencing (PTGS) (e.g. RDR1, RDR6 and AGO2) and transcriptional gene silencing (TGS) (e.g. siRNA-dependent DNA methylation and histone H3) components. Mediates siRNA accumulation at specific chromatin loci. Binds H3K4me0 through its PHD to enforce low levels of H3K4 methylation and gene silencing at a subset of genomic loci. This chain is Zinc finger CCCH domain-containing protein 19 (NERD), found in Arabidopsis thaliana (Mouse-ear cress).